The primary structure comprises 36 residues: Toxin Iob1 (36 aa).

Cystine bridges form between cysteine 6–cysteine 21, cysteine 13–cysteine 26, and cysteine 20–cysteine 33.

It is found in the secreted. Its function is as follows. Binds reversibly and blocks N-type voltage-gated calcium channels (Cav). The polypeptide is Toxin Iob1 (Isyndus obscurus (Assassin bug)).